Here is a 910-residue protein sequence, read N- to C-terminus: E3 ubiquitin-protein ligase HUL5 (910 aa).

The residue at position 1 (Met1) is an N-acetylmethionine. The disordered stretch occupies residues 1–25 (MLNFTGQTRRRNVNLGNRTRNSKKD). The 101-residue stretch at 810-910 (YGGYKEEDQT…INSGARFDLS (101 aa)) folds into the HECT domain. Cys878 (glycyl thioester intermediate) is an active-site residue.

This sequence belongs to the UBE3C family. Interacts with 19S proteasomes.

The protein resides in the cytoplasm. The protein localises to the cytosol. Its subcellular location is the nucleus. It catalyses the reaction S-ubiquitinyl-[E2 ubiquitin-conjugating enzyme]-L-cysteine + [acceptor protein]-L-lysine = [E2 ubiquitin-conjugating enzyme]-L-cysteine + N(6)-ubiquitinyl-[acceptor protein]-L-lysine.. The protein operates within protein modification; protein ubiquitination. In terms of biological role, non-essential E3 ubiquitin-protein ligase that specifically catalyzes 'Lys-29'- and 'Lys-48'-linked polyubiquitin chains. Accepts ubiquitin from an E2 ubiquitin-conjugating enzyme in the form of a thioester and then directly transfers the ubiquitin to targeted substrates. Associates with the proteasome and promotes elongation of ubiquitin chains on substrates bound to the proteasome. Elongation of ubiquitin chains on substrates bound to the proteasome promotes proteasomal processivity. Also promotes ubiquitin elongation of 26S proteasome subunit RPN10. Involved in the stress response required to maintain cell fitness following heat-shock: acts by mediating ubiquitination of cytosolic misfolded proteins, leading to their subsequent degradation. This is E3 ubiquitin-protein ligase HUL5 from Saccharomyces cerevisiae (strain ATCC 204508 / S288c) (Baker's yeast).